Consider the following 300-residue polypeptide: Transacylase cctO (300 aa).

Residues 52–72 (IVYVSLTFFVVSIGLNFILAI) traverse the membrane as a helical segment. 2 consecutive short sequence motifs (HXXHC) follow at residues 185 to 189 (HQLGC) and 225 to 229 (HVDQC). Asn-270 is a glycosylation site (N-linked (GlcNAc...) asparagine).

The protein belongs to the ustYa family.

It is found in the membrane. The protein operates within mycotoxin biosynthesis. Its function is as follows. Transacylase; part of the gene cluster that mediates the biosynthesis of the mycotoxin cyclochlorotine, a hepatotoxic and carcinogenic cyclic chlorinated pentapeptide. Within the pathway, cctO catalyzes the intramolecular O,N-transacylation from isocyclochlorotine to cyclochlorotine. The NRPS cctN initially catalyzes the condensation of L-serine (Ser), Pro, L-2-aminobutyrate (2Abu), Ser, and beta-Phe in this order to produce isocyclotine. After the dichlorination of Pro2 catalyzed by cctP2 to produce isocyclochlorotine, the cctO-mediated transacylation of isocyclochlorotine can furnish cyclochlorotine. The subsequent hydroxylation of cyclochlorotine by cctR yields hydroxycyclochlorotine as the final product. CctP1 probably acts as a phenylalanine aminomutase and provides the uncommon building block beta-Phe. Furthermore, 2Abu can be synthesized from threonine by one of the threonine dehydratases and transaminases localized outside of the cluster. The functions of the remaining proteins encoded by the cluster, cctM and cctT, have not been identified yet. In Talaromyces islandicus (Penicillium islandicum), this protein is Transacylase cctO.